A 90-amino-acid chain; its full sequence is Mitochondrial import inner membrane translocase subunit Tim8 A (90 aa).

The Twin CX3C motif motif lies at 36–59 (CWDKCMDKPGPKLDSRAEMCFVNC). 2 disulfide bridges follow: C36–C59 and C40–C55.

Belongs to the small Tim family. In terms of assembly, heterohexamer; composed of 3 copies of TIMM8A and 3 copies of TIMM13, named soluble 70 kDa complex. Associates with the TIM22 complex, whose core is composed of TIMM22.

The protein localises to the mitochondrion inner membrane. In terms of biological role, mitochondrial intermembrane chaperone that participates in the import and insertion of some multi-pass transmembrane proteins into the mitochondrial inner membrane. Also required for the transfer of beta-barrel precursors from the TOM complex to the sorting and assembly machinery (SAM complex) of the outer membrane. Acts as a chaperone-like protein that protects the hydrophobic precursors from aggregation and guide them through the mitochondrial intermembrane space. The TIMM8-TIMM13 complex mediates the import of some proteins while the predominant TIMM9-TIMM10 70 kDa complex mediates the import of much more proteins. This is Mitochondrial import inner membrane translocase subunit Tim8 A (timm8a) from Takifugu rubripes (Japanese pufferfish).